The sequence spans 545 residues: Glucose-6-phosphate isomerase (545 aa).

The active-site Proton donor is glutamate 351. Active-site residues include histidine 382 and lysine 510.

The protein belongs to the GPI family.

It is found in the cytoplasm. It carries out the reaction alpha-D-glucose 6-phosphate = beta-D-fructose 6-phosphate. It participates in carbohydrate biosynthesis; gluconeogenesis. The protein operates within carbohydrate degradation; glycolysis; D-glyceraldehyde 3-phosphate and glycerone phosphate from D-glucose: step 2/4. Catalyzes the reversible isomerization of glucose-6-phosphate to fructose-6-phosphate. The chain is Glucose-6-phosphate isomerase from Shewanella baltica (strain OS195).